A 148-amino-acid chain; its full sequence is Deoxyuridine 5'-triphosphate nucleotidohydrolase (148 aa).

Substrate-binding positions include R67–G69, N80, L84–D86, and M94.

The protein belongs to the dUTPase family. Mg(2+) is required as a cofactor.

The catalysed reaction is dUTP + H2O = dUMP + diphosphate + H(+). Its pathway is pyrimidine metabolism; dUMP biosynthesis; dUMP from dCTP (dUTP route): step 2/2. In terms of biological role, this enzyme is involved in nucleotide metabolism: it produces dUMP, the immediate precursor of thymidine nucleotides and it decreases the intracellular concentration of dUTP so that uracil cannot be incorporated into DNA. The sequence is that of Deoxyuridine 5'-triphosphate nucleotidohydrolase from Burkholderia cenocepacia (strain ATCC BAA-245 / DSM 16553 / LMG 16656 / NCTC 13227 / J2315 / CF5610) (Burkholderia cepacia (strain J2315)).